We begin with the raw amino-acid sequence, 118 residues long: NLIQFSNMIQCANKGSRPSLDYADYGCYCGWGGSGTPVDELDRCCKVHDDCYAEAGKKGCYPKLTLYSWDCTGNVPICNPKTECKDFTCACDAEAAKCFAKAPYKKENWNIDTKTRCK.

7 disulfide bridges follow: cysteine 11–cysteine 71, cysteine 27–cysteine 117, cysteine 29–cysteine 45, cysteine 44–cysteine 98, cysteine 51–cysteine 91, cysteine 60–cysteine 84, and cysteine 78–cysteine 89. Tyrosine 28, glycine 30, and glycine 32 together coordinate Ca(2+). Residue histidine 48 is part of the active site. Aspartate 49 provides a ligand contact to Ca(2+). Aspartate 92 is a catalytic residue.

The protein belongs to the phospholipase A2 family. Group I subfamily. D49 sub-subfamily. Ca(2+) serves as cofactor. As to expression, expressed by the venom gland.

It is found in the secreted. The enzyme catalyses a 1,2-diacyl-sn-glycero-3-phosphocholine + H2O = a 1-acyl-sn-glycero-3-phosphocholine + a fatty acid + H(+). Functionally, PLA2 catalyzes the calcium-dependent hydrolysis of the 2-acyl groups in 3-sn-phosphoglycerides. The chain is Basic phospholipase A2 PA-5 from Pseudechis australis (Mulga snake).